A 381-amino-acid chain; its full sequence is Stearoyl-[acyl-carrier-protein] 9-desaturase 1, chloroplastic (381 aa).

The N-terminal 26 residues, Met-1–Ser-26, are a transit peptide targeting the chloroplast. Glu-120, Glu-158, His-161, Glu-211, Glu-244, and His-247 together coordinate Fe cation.

This sequence belongs to the fatty acid desaturase type 2 family. As to quaternary structure, homodimer. The cofactor is Fe(2+).

Its subcellular location is the plastid. The protein localises to the chloroplast. It carries out the reaction octadecanoyl-[ACP] + 2 reduced [2Fe-2S]-[ferredoxin] + O2 + 2 H(+) = (9Z)-octadecenoyl-[ACP] + 2 oxidized [2Fe-2S]-[ferredoxin] + 2 H2O. It functions in the pathway lipid metabolism; fatty acid metabolism. Functionally, converts stearoyl-ACP to oleoyl-ACP by introduction of a cis double bond between carbons 9 and 10 of the acyl chain. The protein is Stearoyl-[acyl-carrier-protein] 9-desaturase 1, chloroplastic of Oryza sativa subsp. indica (Rice).